Consider the following 325-residue polypeptide: Methionyl-tRNA formyltransferase (325 aa).

(6S)-5,6,7,8-tetrahydrofolate is bound at residue 112–115; the sequence is SLLP.

Belongs to the Fmt family.

It carries out the reaction L-methionyl-tRNA(fMet) + (6R)-10-formyltetrahydrofolate = N-formyl-L-methionyl-tRNA(fMet) + (6S)-5,6,7,8-tetrahydrofolate + H(+). In terms of biological role, attaches a formyl group to the free amino group of methionyl-tRNA(fMet). The formyl group appears to play a dual role in the initiator identity of N-formylmethionyl-tRNA by promoting its recognition by IF2 and preventing the misappropriation of this tRNA by the elongation apparatus. This chain is Methionyl-tRNA formyltransferase, found in Roseiflexus sp. (strain RS-1).